Reading from the N-terminus, the 110-residue chain is Nucleotide-binding protein in fmt 3'region (110 aa).

An ATP-binding site is contributed by 8 to 15 (GLSGAGKT). 57 to 60 (DARA) is a binding site for GTP.

Belongs to the RapZ-like family.

Functionally, displays ATPase and GTPase activities. This chain is Nucleotide-binding protein in fmt 3'region, found in Thermus thermophilus.